Reading from the N-terminus, the 477-residue chain is Glycogen synthase (477 aa).

Lys15 contributes to the ADP-alpha-D-glucose binding site.

This sequence belongs to the glycosyltransferase 1 family. Bacterial/plant glycogen synthase subfamily.

The catalysed reaction is [(1-&gt;4)-alpha-D-glucosyl](n) + ADP-alpha-D-glucose = [(1-&gt;4)-alpha-D-glucosyl](n+1) + ADP + H(+). The protein operates within glycan biosynthesis; glycogen biosynthesis. Synthesizes alpha-1,4-glucan chains using ADP-glucose. The polypeptide is Glycogen synthase (Klebsiella pneumoniae subsp. pneumoniae (strain ATCC 700721 / MGH 78578)).